A 940-amino-acid polypeptide reads, in one-letter code: MLSKLLRLGEGRMLKRLKRVADYVNTLSDEVEKLTDAELRAKTDEFKKRHADGESLDDLLPEAFAVAREAAWRVLDQRPFDVQVMGAAALHFGNVAEMKTGEGKTLTSVLPAYLNGIGGKGVHVVTVNDYLAKRDSEWMGRVHRFLGLDVGVILAQMTPDERRVAYNADITYGTNNEFGFDYLRDNMAHSLDDLVQRGHNFAIVDEVDSILIDEARTPLIISGPADGASNWYLEFARLAPLMEKDVHYEVDLRKRTVGVHELGVEFVEDQLGIDNLYEAANSPLVSYLNNALKAKELFHRDKDYIVRDGEVLIVDEFTGRVLYGRRYNEGMHQAIEAKEHVEIKAENQTLATITLQNYFRLYDKLSGMTGTAQTEAAELHEIYKLGVVPIPTNKPMIRTDQSDLIYKTEEAKYIAVVDDVVERYQKGQPVLIGTTSVERSEYLSRQFQKRRIPHNVLNAKYHEQEAGIVAVAGRRGGVTVATHMAGRGTDIVLGGNVDFLTDQRLRERGLDPVETPDEYEAAWHEELPKVKAEAAAEAKEVIEAGGLYVLGTERHESRRIDNQLRGRSGRQGDPGESRFYLSLGDELMRRFNGAALEAMLNRLNLPDDVPIEAKMVTRAIKSAQTQVEQQNFEVRKNVLKYDEVMNQQRKVIYAERRRILEGENLKEQALEMVRDVVTAYVNGATAEGYAEDWDLDALWTALKTLYPVGIDYATLTRRDADGGFDDLTREELLEALLKDAERAYATREAELEEIAGEGAMRQLERNVLLNVIDRKWREHLYEMDYLKEGIGLRAMAQRDPLVEYQREGYDMFMAMLDGMKEESVGFLFNVTVEAVPAPQVAPVQTPEGLAELGAPAEQGGTATAARDEAPTQLRAKGIDNEAPAMTYSGPSEDGSAQVQRNGGDAKTPAGVPAGASRRERRAAARQQGRGAKPPKSVKRR.

Residues Gln-83, 101 to 105 (GEGKT), and Asp-490 contribute to the ATP site. Positions 856–940 (AEQGGTATAA…AKPPKSVKRR (85 aa)) are disordered.

This sequence belongs to the SecA family. As to quaternary structure, monomer and homodimer. Part of the essential Sec protein translocation apparatus which comprises SecA, SecYEG and auxiliary proteins SecDF. Other proteins may also be involved.

It localises to the cell membrane. Its subcellular location is the cytoplasm. The enzyme catalyses ATP + H2O + cellular proteinSide 1 = ADP + phosphate + cellular proteinSide 2.. Its function is as follows. Part of the Sec protein translocase complex. Interacts with the SecYEG preprotein conducting channel. Has a central role in coupling the hydrolysis of ATP to the transfer of proteins into and across the cell membrane, serving as an ATP-driven molecular motor driving the stepwise translocation of polypeptide chains across the membrane. The polypeptide is Protein translocase subunit SecA 1 (Mycolicibacterium paratuberculosis (strain ATCC BAA-968 / K-10) (Mycobacterium paratuberculosis)).